Consider the following 700-residue polypeptide: Polyribonucleotide nucleotidyltransferase (700 aa).

Mg(2+)-binding residues include Asp-491 and Asp-497. The 60-residue stretch at 558-617 folds into the KH domain; the sequence is PNYAVIEINPDKIRDVIGKGGATIRQLTEETGAVIDIDDAGTIRIFGENKAATKAAIAKI. The S1 motif domain maps to 627-695; the sequence is GKTYEGTVAR…NRGRIKLTMK (69 aa).

Belongs to the polyribonucleotide nucleotidyltransferase family. In terms of assembly, component of the RNA degradosome, which is a multiprotein complex involved in RNA processing and mRNA degradation. Mg(2+) serves as cofactor.

It is found in the cytoplasm. It carries out the reaction RNA(n+1) + phosphate = RNA(n) + a ribonucleoside 5'-diphosphate. In terms of biological role, involved in mRNA degradation. Catalyzes the phosphorolysis of single-stranded polyribonucleotides processively in the 3'- to 5'-direction. The chain is Polyribonucleotide nucleotidyltransferase from Psychrobacter cryohalolentis (strain ATCC BAA-1226 / DSM 17306 / VKM B-2378 / K5).